Consider the following 71-residue polypeptide: Large ribosomal subunit protein bL31 (71 aa).

Residues Cys16, Cys18, Cys37, and Cys40 each coordinate Zn(2+).

It belongs to the bacterial ribosomal protein bL31 family. Type A subfamily. As to quaternary structure, part of the 50S ribosomal subunit. It depends on Zn(2+) as a cofactor.

Its function is as follows. Binds the 23S rRNA. This is Large ribosomal subunit protein bL31 from Nitratidesulfovibrio vulgaris (strain DSM 19637 / Miyazaki F) (Desulfovibrio vulgaris).